The chain runs to 395 residues: Tryptophan synthase beta chain (395 aa).

At K86 the chain carries N6-(pyridoxal phosphate)lysine.

This sequence belongs to the TrpB family. As to quaternary structure, tetramer of two alpha and two beta chains. The cofactor is pyridoxal 5'-phosphate.

It catalyses the reaction (1S,2R)-1-C-(indol-3-yl)glycerol 3-phosphate + L-serine = D-glyceraldehyde 3-phosphate + L-tryptophan + H2O. The protein operates within amino-acid biosynthesis; L-tryptophan biosynthesis; L-tryptophan from chorismate: step 5/5. Functionally, the beta subunit is responsible for the synthesis of L-tryptophan from indole and L-serine. In Psychromonas ingrahamii (strain DSM 17664 / CCUG 51855 / 37), this protein is Tryptophan synthase beta chain.